The sequence spans 163 residues: Transcription elongation factor GreA (163 aa).

The stretch at 49 to 80 forms a coiled coil; the sequence is ENAEYDAARDRQSEVERRILELERILENAEII.

It belongs to the GreA/GreB family.

Functionally, necessary for efficient RNA polymerase transcription elongation past template-encoded arresting sites. The arresting sites in DNA have the property of trapping a certain fraction of elongating RNA polymerases that pass through, resulting in locked ternary complexes. Cleavage of the nascent transcript by cleavage factors such as GreA or GreB allows the resumption of elongation from the new 3'terminus. GreA releases sequences of 2 to 3 nucleotides. The polypeptide is Transcription elongation factor GreA (Mycoplasmopsis agalactiae (strain NCTC 10123 / CIP 59.7 / PG2) (Mycoplasma agalactiae)).